Consider the following 515-residue polypeptide: MSRAAAKFKIPMPVTKADFAFPSLRAFSIVVAADQQHGIGDGETIPWTVPETLAFFKDQTTLLRNKKPPTEKKRNAVVMGRKTWEVPLKFRPLKGRLNVVLSCRRPVDDLLAQLPEEKRAAAAADVVINGGLKEALHLLARPPYCSSIETAYCIGGARVYTEAMQSPCVEKLKEVYLTRVHTAPTCNRFYEFVRRRRARAAVDLESTSGVKVSDAAAHLSYEIMKYVPHNAEERQYLELIDRIMKTGLVKEDRTGVGTISLFGAQMFSLRDNQLPLLTTKRVFWRGVCEELIWFLRGETNAHVLADKDIHIWDGNGSREFLDSRGLTENKEMDLGPVYGFQWRHFGADYKGFDANYDEGVDQIKTIVETLKTNDRRLLVTAWNPCALHKMAVRPCHLLGQFYVNTQTKELSCMLYQRCCDMGLGVPFNIASYALLTILIAKATGLRPGELVHTLGTAHVYSNHVEALKEQLQRVPVAFPVLVFKKEREFLEDYESTDMEVVDYVPYPPIKMEMAV.

The 203-residue stretch at 26-228 (AFSIVVAADQ…LSYEIMKYVP (203 aa)) folds into the DHFR domain. Valine 30 is a binding site for substrate. NADP(+) is bound by residues alanine 32, 38-44 (GIGDGET), 81-83 (RKT), and 101-104 (LSCR). Substrate contacts are provided by isoleucine 154, tyrosine 160, and threonine 178. Residue 155 to 162 (GGARVYTE) participates in NADP(+) binding. Residues 233–515 (ERQYLELIDR…YPPIKMEMAV (283 aa)) are thymidylate synthase. Arginine 253 contacts dUMP. Cysteine 395 is a catalytic residue. DUMP-binding positions include histidine 396, 416-420 (QRCCD), asparagine 428, and 458-460 (HVY).

The protein in the N-terminal section; belongs to the dihydrofolate reductase family. In the C-terminal section; belongs to the thymidylate synthase family.

The enzyme catalyses (6S)-5,6,7,8-tetrahydrofolate + NADP(+) = 7,8-dihydrofolate + NADPH + H(+). The catalysed reaction is dUMP + (6R)-5,10-methylene-5,6,7,8-tetrahydrofolate = 7,8-dihydrofolate + dTMP. It participates in cofactor biosynthesis; tetrahydrofolate biosynthesis; 5,6,7,8-tetrahydrofolate from 7,8-dihydrofolate: step 1/1. Its function is as follows. Bifunctional enzyme. Involved in de novo dTMP biosynthesis. Key enzyme in folate metabolism. Catalyzes an essential reaction for de novo glycine and purine synthesis, DNA precursor synthesis, and for the conversion of dUMP to dTMP. This chain is Bifunctional dihydrofolate reductase-thymidylate synthase, found in Crithidia fasciculata.